We begin with the raw amino-acid sequence, 282 residues long: Blarina toxin (282 aa).

A signal peptide spans 1-17 (MCFLLLCLTLTLAGTGA). A propeptide spans 18–29 (VPTGPSIEIHSR) (activation peptide). Residues 30-279 (IIGGWECDKH…YISWIQETIK (250 aa)) enclose the Peptidase S1 domain. Disulfide bonds link Cys-36–Cys-194, Cys-57–Cys-73, Cys-170–Cys-240, Cys-205–Cys-219, and Cys-230–Cys-255. Catalysis depends on His-72, which acts as the Charge relay system. Ser-100 is a glycosylation site (O-linked (GalNAc...) serine). 2 N-linked (GlcNAc...) asparagine glycosylation sites follow: Asn-109 and Asn-122. The active-site Charge relay system is the Asp-138. The active-site Charge relay system is the Ser-234.

This sequence belongs to the peptidase S1 family. Kallikrein subfamily. Submaxillary and sublingual salivary glands.

The protein localises to the secreted. With respect to regulation, strongly inhibited by aprotinin, moderately inhibited by secretory leukoprotease inhibitor, the Kunitz-type soybean trypsin inhibitor, and leupeptin, and not inhibited by urinary trypsin inhibitor or alpha-1 protease inhibitor. Its function is as follows. Has kallikrein-like activity, converts kininogens to kinins, and has dilatory effects on the blood vessel walls. Shows highest activity toward Pro-Phe-Arg-MCA and Boc-Val-Leu-Lys-MCA in vitro. Has preference for Arg and Lys in position P1 and hydrophobic residues in position P2. This Blarina brevicauda (Northern short-tailed shrew) protein is Blarina toxin (BTX).